A 172-amino-acid chain; its full sequence is Lytic chitin monooxygenase (172 aa).

The first 30 residues, 1–30 (MHAGRKTAVLIGAALAPVIAVSLPAASASA), serve as a signal peptide directing secretion. The Cu cation site is built by H31 and H106. The 138-residue stretch at 31–168 (HGYISNPPSR…DNAFYACIDV (138 aa)) folds into the Chitin-binding type-4 domain.

It depends on Cu(2+) as a cofactor.

Its subcellular location is the secreted. It catalyses the reaction [(1-&gt;4)-N-acetyl-beta-D-glucosaminyl]n+m + reduced acceptor + O2 = [(1-&gt;4)-N-acetyl-beta-D-glucosaminyl]m-1-(1-&gt;4)-2-(acetylamino)-2-deoxy-D-glucono-1,5-lactone + [(1-&gt;4)-N-acetyl-beta-D-glucosaminyl]n + acceptor + H2O.. It participates in glycan degradation; chitin degradation. Involved in chitin degradation. Catalyzes the oxidative cleavage of glycosidic bonds in chitin via a copper-dependent mechanism, leading to oxidized chitooligomers with degrees of polymerization of 4-6. Is not active on cellulose. This Streptomyces ambofaciens (strain ATCC 23877 / 3486 / DSM 40053 / JCM 4204 / NBRC 12836 / NRRL B-2516) protein is Lytic chitin monooxygenase.